The following is a 348-amino-acid chain: Probable dual-specificity RNA methyltransferase RlmN (348 aa).

Glu90 acts as the Proton acceptor in catalysis. A Radical SAM core domain is found at 96-324 (AAERLTVCVS…ASVRHTRGLE (229 aa)). A disulfide bridge links Cys103 with Cys329. [4Fe-4S] cluster-binding residues include Cys110, Cys114, and Cys117. S-adenosyl-L-methionine is bound by residues 157-158 (GE), Ser187, 210-212 (SLH), and Asn286. The S-methylcysteine intermediate role is filled by Cys329.

Belongs to the radical SAM superfamily. RlmN family. Requires [4Fe-4S] cluster as cofactor.

It localises to the cytoplasm. It carries out the reaction adenosine(2503) in 23S rRNA + 2 reduced [2Fe-2S]-[ferredoxin] + 2 S-adenosyl-L-methionine = 2-methyladenosine(2503) in 23S rRNA + 5'-deoxyadenosine + L-methionine + 2 oxidized [2Fe-2S]-[ferredoxin] + S-adenosyl-L-homocysteine. The enzyme catalyses adenosine(37) in tRNA + 2 reduced [2Fe-2S]-[ferredoxin] + 2 S-adenosyl-L-methionine = 2-methyladenosine(37) in tRNA + 5'-deoxyadenosine + L-methionine + 2 oxidized [2Fe-2S]-[ferredoxin] + S-adenosyl-L-homocysteine. In terms of biological role, specifically methylates position 2 of adenine 2503 in 23S rRNA and position 2 of adenine 37 in tRNAs. The chain is Probable dual-specificity RNA methyltransferase RlmN from Gloeobacter violaceus (strain ATCC 29082 / PCC 7421).